Reading from the N-terminus, the 377-residue chain is Putative FBD-associated F-box protein At5g44940 (377 aa).

An F-box domain is found at 4–50; sequence FDYISEFPDCLLTQILLNLPTKDSVKTSVLSKRWRNLWLNVPGLRLR. One can recognise an FBD domain in the interval 297–346; the sequence is IDFHKVPQCLISTLEYVQIEELILKEKSGIKLVDYFLENSAVLKKLTLSF.

This Arabidopsis thaliana (Mouse-ear cress) protein is Putative FBD-associated F-box protein At5g44940.